The chain runs to 652 residues: Starch synthase 1, chloroplastic/amyloplastic (652 aa).

The N-terminal 49 residues, 1-49 (MASLQISGSVKFEPFVGFNRIRHFRPIASLGFPRFRRRFSIGRSLLLRR), are a transit peptide targeting the chloroplast. Residue Lys156 participates in ADP-alpha-D-glucose binding.

It belongs to the glycosyltransferase 1 family. Bacterial/plant glycogen synthase subfamily. In terms of tissue distribution, expressed in roots, leaves, stems, buds and flowers.

The protein resides in the plastid. Its subcellular location is the chloroplast. It is found in the amyloplast. It carries out the reaction [(1-&gt;4)-alpha-D-glucosyl](n) + ADP-alpha-D-glucose = [(1-&gt;4)-alpha-D-glucosyl](n+1) + ADP + H(+). It functions in the pathway glycan biosynthesis; starch biosynthesis. Involved in the synthesis of short glycan chains within amylopectin in leaves. Is required to generate chains up to about a degree of polymerization of 10 (DP10). The polypeptide is Starch synthase 1, chloroplastic/amyloplastic (SS1) (Arabidopsis thaliana (Mouse-ear cress)).